The chain runs to 399 residues: Dual-specificity RNA methyltransferase RlmN (399 aa).

The active-site Proton acceptor is Glu-122. Positions 128–371 constitute a Radical SAM core domain; it reads ETDRGTLCVS…VRTPRGRDIL (244 aa). An intrachain disulfide couples Cys-135 to Cys-374. Residues Cys-142, Cys-146, and Cys-149 each contribute to the [4Fe-4S] cluster site. Residues 200-201, Ser-232, 254-256, and Asn-331 each bind S-adenosyl-L-methionine; these read GE and SLH. Cys-374 functions as the S-methylcysteine intermediate in the catalytic mechanism.

This sequence belongs to the radical SAM superfamily. RlmN family. Requires [4Fe-4S] cluster as cofactor.

The protein resides in the cytoplasm. The enzyme catalyses adenosine(2503) in 23S rRNA + 2 reduced [2Fe-2S]-[ferredoxin] + 2 S-adenosyl-L-methionine = 2-methyladenosine(2503) in 23S rRNA + 5'-deoxyadenosine + L-methionine + 2 oxidized [2Fe-2S]-[ferredoxin] + S-adenosyl-L-homocysteine. It carries out the reaction adenosine(37) in tRNA + 2 reduced [2Fe-2S]-[ferredoxin] + 2 S-adenosyl-L-methionine = 2-methyladenosine(37) in tRNA + 5'-deoxyadenosine + L-methionine + 2 oxidized [2Fe-2S]-[ferredoxin] + S-adenosyl-L-homocysteine. In terms of biological role, specifically methylates position 2 of adenine 2503 in 23S rRNA and position 2 of adenine 37 in tRNAs. m2A2503 modification seems to play a crucial role in the proofreading step occurring at the peptidyl transferase center and thus would serve to optimize ribosomal fidelity. The protein is Dual-specificity RNA methyltransferase RlmN of Rhodopseudomonas palustris (strain ATCC BAA-98 / CGA009).